Here is a 503-residue protein sequence, read N- to C-terminus: Maturase K (503 aa).

It belongs to the intron maturase 2 family. MatK subfamily.

Its subcellular location is the plastid. It localises to the chloroplast. Its function is as follows. Usually encoded in the trnK tRNA gene intron. Probably assists in splicing its own and other chloroplast group II introns. In Vicia sativa (Spring vetch), this protein is Maturase K.